Reading from the N-terminus, the 66-residue chain is Large ribosomal subunit protein uL29 (66 aa).

This sequence belongs to the universal ribosomal protein uL29 family.

This Helicobacter pylori (strain Shi470) protein is Large ribosomal subunit protein uL29.